The primary structure comprises 358 residues: Gentisate 1,2-dioxygenase (358 aa).

In terms of domain architecture, Cupin type-2 spans 99–165; the sequence is QYLGPREVAP…VTDEPMAWLD (67 aa). A disordered region spans residues 185–215; the sequence is DELSTRETPERSRGERLWGHPGLRPIGRPDQ. Residues 187–202 show a composition bias toward basic and acidic residues; that stretch reads LSTRETPERSRGERLW.

Belongs to the gentisate 1,2-dioxygenase family.

The enzyme catalyses 2,5-dihydroxybenzoate + O2 = 3-maleylpyruvate + H(+). Functionally, involved in the degradation of salicylate via a pathway involving coenzyme A derivative. Catalyzes the oxygen-dependent ring fission of gentisate between the carboxyl and proximal hydroxyl groups at positions 1 and 2 of the aromatic ring to form maleylpyruvate. The substrate specificity is strong, since salicylate, catechol, protocatechuic acid, homogenetisate, 2,3-dihydroxybenzoate or 5-aminosalicylate cannot substitute for gentisate in the ring cleavage reaction. This is Gentisate 1,2-dioxygenase from Streptomyces sp.